Reading from the N-terminus, the 146-residue chain is Hemoglobin subunit beta (146 aa).

In terms of domain architecture, Globin spans 2-146 (QWSAEEKQLI…VAHALARKYH (145 aa)). 2 residues coordinate heme b: H63 and H92.

The protein belongs to the globin family. As to quaternary structure, heterotetramer of two alpha chains and two beta chains. Red blood cells.

Its function is as follows. Involved in oxygen transport from the lung to the various peripheral tissues. The polypeptide is Hemoglobin subunit beta (HBB) (Struthio camelus (Common ostrich)).